The following is a 289-amino-acid chain: Glycine--tRNA ligase alpha subunit (289 aa).

It belongs to the class-II aminoacyl-tRNA synthetase family. As to quaternary structure, tetramer of two alpha and two beta subunits.

Its subcellular location is the cytoplasm. It carries out the reaction tRNA(Gly) + glycine + ATP = glycyl-tRNA(Gly) + AMP + diphosphate. The polypeptide is Glycine--tRNA ligase alpha subunit (glyQ) (Rickettsia prowazekii (strain Madrid E)).